The primary structure comprises 1189 residues: Disabled homolog 2-interacting protein (1189 aa).

A disordered region spans residues 1-75 (MSAGGSARKS…EPSAATPFRV (75 aa)). Residues 20–38 (LLRRPRLQRQRSRSRSRTR) show a composition bias toward basic residues. A compositionally biased stretch (basic and acidic residues) spans 39–49 (PARESPQERPG). The PH domain occupies 101–202 (SFRHILPGFR…WMENLRRAVH (102 aa)). A C2 domain is found at 193-311 (WMENLRRAVH…AGRQFVEKWY (119 aa)). One can recognise a Ras-GAP domain in the interval 387-595 (GKVKDFLTDL…TNMQRFLLEI (209 aa)). The segment at 646 to 943 (LRDVHTALST…RTPPNLLSTL (298 aa)) is necessary for interaction with AKT1. Residues 653-668 (LSTPGSGQLPGTNDLA) are compositionally biased toward polar residues. Disordered stretches follow at residues 653–678 (LSTPGSGQLPGTNDLASTPGSGSSSI) and 715–742 (RSSGVQPSPARSSSYSEANEPDLQMANG). A compositionally biased stretch (low complexity) spans 669-678 (STPGSGSSSI). Polar residues predominate over residues 715-731 (RSSGVQPSPARSSSYSE). Ser-728 bears the Phosphoserine; by MAP3K5 and RIPK1 mark. Phosphoserine is present on Ser-747. Disordered stretches follow at residues 803–823 (AGQTPTTPGTSEGAPGRPQLL), 843–865 (PRGLGDSGSEGHSSLSSHSNSEE), 895–998 (SLTE…SPNA), 1015–1035 (EDEGLGPDPPHRDRLRSKDEL), and 1164–1189 (RNGISPTNPTKLQITENGEFRNSSNC). Low complexity predominate over residues 852 to 865 (EGHSSLSSHSNSEE). A compositionally biased stretch (pro residues) spans 919–931 (QPPPPPPPPPPAP). 2 stretches are compositionally biased toward polar residues: residues 938 to 955 (NLLSTLQYPRPSSGTLAS) and 966 to 976 (RLRQQSSSSKG). 2 positions are modified to phosphoserine: Ser-978 and Ser-995. A compositionally biased stretch (basic and acidic residues) spans 1023–1035 (PPHRDRLRSKDEL). The stretch at 1026–1159 (RDRLRSKDEL…SALTQLKERY (134 aa)) forms a coiled coil.

As to quaternary structure, on plasma membrane, exists in an inactive form complexed with TNFR1; in response to TNF-alpha, dissociates from TNFR1 complex, translocates to cytoplasm and forms part of an intracellular signaling complex comprising TRADD, RIPK1, TRAF2 and MAP3K5. Interacts with DAB1. Interacts (via NPXY motif) with DAB2 (via PID domain). Interacts (via PH domain) with ERN1. Part of a cytoplasmic complex made of HIPK1, DAB2IP and MAP3K5 in response to TNF-alpha; this complex formation promotes MAP3K5-JNK activation and subsequent apoptosis. Interacts (via N-terminal domain) with JAK2; the interaction occurs in a IFNG/IFN-gamma-dependent manner and inhibits JAK2 autophosphorylation activity. Interacts (via C2 domain) with GSK3B; the interaction stimulates GSK3B kinase activation. Interacts (via C2 domain) with PPP2CA. Interacts (via proline-rich motif) with a regulatory p85 subunit (via SH3 domain) of the PI3K complex; the interaction inhibits the PI3K-AKT complex activity in a TNF-alpha-dependent manner in prostate cancer (PCa) cells. Interacts with AKT1; the interaction is increased in a TNF-alpha-induced manner. Interacts (via C2 domain and active form preferentially) with KDR/VEGFR2 (tyrosine-phosphorylated active form preferentially); the interaction occurs at the late phase of VEGFA response and inhibits KDR/VEGFR2 activity. Interacts (via N-terminus C2 domain) with MAP3K5 ('Ser-966' dephosphorylated form preferentially); the interaction occurs in a TNF-alpha-induced manner. Interacts (via Ras-GAP domain) with the catalytic subunit of protein phosphatase PP2A; the interaction occurs in resting endothelial cells, is further enhanced by TNF-alpha stimulation and is required to bridge PP2A to MAP3K5. Interacts (via C-terminus PER domain) with TRAF2 (via zinc fingers); the interaction occurs in a TNF-alpha-dependent manner. Interacts with 14-3-3 proteins; the interaction occurs in a TNF-alpha-dependent manner. Interacts (via Ras-GAP domain) with RIPK1 (via kinase domain); the interaction occurs in a TNF-alpha-dependent manner. Interacts with RAB40C; acts as a GAP for RAB40C. In terms of processing, in response to TNF-alpha-induction, phosphorylated at Ser-728; phosphorylation leads to a conformational change, and thus, increases its association with 14-3-3 proteins, MAP3K5, RIPK1 and TRAF2 in endothelial cells; also stimulates regulatory p85 subunit sequestring and PI3K-p85 complex activity inhibition. As to expression, expressed in endothelial and vascular smooth muscle cells (VSMCs). Expressed in prostate epithelial but poorly in prostate cancer cells. Poorly expressed in medulloblastoma cells compared to cerebellar precursor proliferating progenitor cells (at protein level). Low expression in prostate. Down-regulated in prostate cancer.

It is found in the cytoplasm. The protein resides in the cell membrane. It localises to the membrane. Its subcellular location is the cell projection. The protein localises to the dendrite. Functionally, functions as a scaffold protein implicated in the regulation of a large spectrum of both general and specialized signaling pathways. Involved in several processes such as innate immune response, inflammation and cell growth inhibition, apoptosis, cell survival, angiogenesis, cell migration and maturation. Also plays a role in cell cycle checkpoint control; reduces G1 phase cyclin levels resulting in G0/G1 cell cycle arrest. Mediates signal transduction by receptor-mediated inflammatory signals, such as the tumor necrosis factor (TNF), interferon (IFN) or lipopolysaccharide (LPS). Modulates the balance between phosphatidylinositol 3-kinase (PI3K)-AKT-mediated cell survival and apoptosis stimulated kinase (MAP3K5)-JNK signaling pathways; sequesters both AKT1 and MAP3K5 and counterbalances the activity of each kinase by modulating their phosphorylation status in response to pro-inflammatory stimuli. Acts as a regulator of the endoplasmic reticulum (ER) unfolded protein response (UPR) pathway; specifically involved in transduction of the ER stress-response to the JNK cascade through ERN1. Mediates TNF-alpha-induced apoptosis activation by facilitating dissociation of inhibitor 14-3-3 from MAP3K5; recruits the PP2A phosphatase complex which dephosphorylates MAP3K5 on 'Ser-966', leading to the dissociation of 13-3-3 proteins and activation of the MAP3K5-JNK signaling pathway in endothelial cells. Also mediates TNF/TRAF2-induced MAP3K5-JNK activation, while it inhibits CHUK-NF-kappa-B signaling. Acts a negative regulator in the IFN-gamma-mediated JAK-STAT signaling cascade by inhibiting smooth muscle cell (VSMCs) proliferation and intimal expansion, and thus, prevents graft arteriosclerosis (GA). Acts as a GTPase-activating protein (GAP) for the ADP ribosylation factor 6 (ARF6), Ras and RAB40C. Promotes hydrolysis of the ARF6-bound GTP and thus, negatively regulates phosphatidylinositol 4,5-bisphosphate (PIP2)-dependent TLR4-TIRAP-MyD88 and NF-kappa-B signaling pathways in endothelial cells in response to lipopolysaccharides (LPS). Binds specifically to phosphatidylinositol 4-phosphate (PtdIns4P) and phosphatidylinositol 3-phosphate (PtdIns3P). In response to vascular endothelial growth factor (VEGFA), acts as a negative regulator of the VEGFR2-PI3K-mediated angiogenic signaling pathway by inhibiting endothelial cell migration and tube formation. In the developing brain, promotes both the transition from the multipolar to the bipolar stage and the radial migration of cortical neurons from the ventricular zone toward the superficial layer of the neocortex in a glial-dependent locomotion process. Probable downstream effector of the Reelin signaling pathway; promotes Purkinje cell (PC) dendrites development and formation of cerebellar synapses. Also functions as a tumor suppressor protein in prostate cancer progression; prevents cell proliferation and epithelial-to-mesenchymal transition (EMT) through activation of the glycogen synthase kinase-3 beta (GSK3B)-induced beta-catenin and inhibition of PI3K-AKT and Ras-MAPK survival downstream signaling cascades, respectively. This chain is Disabled homolog 2-interacting protein, found in Homo sapiens (Human).